Here is a 163-residue protein sequence, read N- to C-terminus: Nucleotide-binding protein syc0675_c (163 aa).

The protein belongs to the YajQ family.

In terms of biological role, nucleotide-binding protein. The polypeptide is Nucleotide-binding protein syc0675_c (Synechococcus sp. (strain ATCC 27144 / PCC 6301 / SAUG 1402/1) (Anacystis nidulans)).